We begin with the raw amino-acid sequence, 233 residues long: MNKPIIALDFQTYQEVEAFLAQFSGESLSVKVGMELFYSNGPAIVEKIKQQNHAIFLDLKLHDIPNTVKSAMIGLAKLGVDMVNVHASGGKKMMEAAREGLEIGSTSGKRPKLIAVTQLTSTSETDMQKEQLVKASLLESVLHYSDLTKQAGLDGVVCSALEADEIKLQNGSDFLRVTPGIRLASDATDDQIRVVTPEKARSIGSSNIVVGRSITRANDPVAAYNQVLKEWNA.

Substrate contacts are provided by residues Asp-9, Lys-31, 58–67, Thr-120, Arg-182, Gln-191, Gly-211, and Arg-212; that span reads DLKLHDIPNT. Catalysis depends on Lys-60, which acts as the Proton donor.

Belongs to the OMP decarboxylase family. Type 1 subfamily. Homodimer.

The catalysed reaction is orotidine 5'-phosphate + H(+) = UMP + CO2. It participates in pyrimidine metabolism; UMP biosynthesis via de novo pathway; UMP from orotate: step 2/2. Functionally, catalyzes the decarboxylation of orotidine 5'-monophosphate (OMP) to uridine 5'-monophosphate (UMP). This Listeria innocua serovar 6a (strain ATCC BAA-680 / CLIP 11262) protein is Orotidine 5'-phosphate decarboxylase.